A 288-amino-acid chain; its full sequence is 4-hydroxybenzoate octaprenyltransferase (288 aa).

Helical transmembrane passes span 23-43 (IGSL…GRGI), 46-66 (AKIL…GCVV), 98-118 (ILFV…NSMT), 141-161 (LPQV…FAAV), 163-183 (ESLP…TVAY), 213-233 (LIIG…GWLM), 234-254 (NLGG…THQQ), and 268-288 (AFLN…ISYW).

This sequence belongs to the UbiA prenyltransferase family. It depends on Mg(2+) as a cofactor.

The protein localises to the cell inner membrane. The enzyme catalyses all-trans-octaprenyl diphosphate + 4-hydroxybenzoate = 4-hydroxy-3-(all-trans-octaprenyl)benzoate + diphosphate. The protein operates within cofactor biosynthesis; ubiquinone biosynthesis. Functionally, catalyzes the prenylation of para-hydroxybenzoate (PHB) with an all-trans polyprenyl group. Mediates the second step in the final reaction sequence of ubiquinone-8 (UQ-8) biosynthesis, which is the condensation of the polyisoprenoid side chain with PHB, generating the first membrane-bound Q intermediate 3-octaprenyl-4-hydroxybenzoate. In Yersinia pseudotuberculosis serotype IB (strain PB1/+), this protein is 4-hydroxybenzoate octaprenyltransferase.